Here is a 266-residue protein sequence, read N- to C-terminus: Putative carbamate hydrolase RutD (266 aa).

The AB hydrolase-1 domain occupies 14–116; that stretch reads PVVVLISGLG…VLVSVNGWLR (103 aa).

Belongs to the AB hydrolase superfamily. Hydrolase RutD family.

It carries out the reaction carbamate + 2 H(+) = NH4(+) + CO2. Its function is as follows. Involved in pyrimidine catabolism. May facilitate the hydrolysis of carbamate, a reaction that can also occur spontaneously. This chain is Putative carbamate hydrolase RutD, found in Escherichia coli O81 (strain ED1a).